We begin with the raw amino-acid sequence, 361 residues long: UDP-N-acetylglucosamine--N-acetylmuramyl-(pentapeptide) pyrophosphoryl-undecaprenol N-acetylglucosamine transferase (361 aa).

UDP-N-acetyl-alpha-D-glucosamine-binding positions include 12 to 14, N124, R163, S189, I241, 260 to 265, and Q286; these read TGG and ALTVSE.

This sequence belongs to the glycosyltransferase 28 family. MurG subfamily.

It is found in the cell inner membrane. It carries out the reaction di-trans,octa-cis-undecaprenyl diphospho-N-acetyl-alpha-D-muramoyl-L-alanyl-D-glutamyl-meso-2,6-diaminopimeloyl-D-alanyl-D-alanine + UDP-N-acetyl-alpha-D-glucosamine = di-trans,octa-cis-undecaprenyl diphospho-[N-acetyl-alpha-D-glucosaminyl-(1-&gt;4)]-N-acetyl-alpha-D-muramoyl-L-alanyl-D-glutamyl-meso-2,6-diaminopimeloyl-D-alanyl-D-alanine + UDP + H(+). Its pathway is cell wall biogenesis; peptidoglycan biosynthesis. Its function is as follows. Cell wall formation. Catalyzes the transfer of a GlcNAc subunit on undecaprenyl-pyrophosphoryl-MurNAc-pentapeptide (lipid intermediate I) to form undecaprenyl-pyrophosphoryl-MurNAc-(pentapeptide)GlcNAc (lipid intermediate II). The protein is UDP-N-acetylglucosamine--N-acetylmuramyl-(pentapeptide) pyrophosphoryl-undecaprenol N-acetylglucosamine transferase of Aeromonas hydrophila subsp. hydrophila (strain ATCC 7966 / DSM 30187 / BCRC 13018 / CCUG 14551 / JCM 1027 / KCTC 2358 / NCIMB 9240 / NCTC 8049).